The chain runs to 775 residues: Melanoma-associated antigen D1 (775 aa).

The tract at residues 37–330 (SEAPPTSQAT…PARQTPSAWQ (294 aa)) is disordered. Over residues 39–50 (APPTSQATAAAS) the composition is skewed to low complexity. Composition is skewed to polar residues over residues 52 to 63 (PNASPQSSQPPT), 84 to 100 (KAQNATTKGPNDYSQAR), 107 to 120 (KNQSKAAFKSQNGT), 149 to 178 (GQNSTKAGPGTTYNFPQSPSANEMTNNQPK), 221 to 235 (AQTSADGSQTQNVES), 247 to 258 (VNNLNVEENNSG), and 296 to 308 (LAWQNPSGWQNQT). 19 consecutive repeat copies span residues 292–297 (WQTPLA), 298–303 (WQNPSG), 304–309 (WQNQTA), 329–334 (WQNPVA), 335–340 (WQNPVI), 341–346 (WPNPVI), 347–352 (WQNPVI), 353–358 (WPNPIV), 359–364 (WPGPIV), 365–370 (WPNPMA), 371–376 (WQSTPG), 377–382 (WQSPPS), 383–388 (WQAPPS), 389–394 (WQSPQD), 395–400 (WQGPPD), 401–406 (WQVPPD), 407–412 (WSMPPD), 413–418 (WSFPSD), and 419–424 (WPFPPD). Residues 292–441 (WQTPLAWQNP…IPPDWQNLRP (150 aa)) form a 22 X 6 AA tandem repeats of W-[PQ]-X-P-X-X region. Over residues 309-326 (ARQTPPAARQSPPARQTP) the composition is skewed to low complexity. A disordered region spans residues 374–409 (TPGWQSPPSWQAPPSWQSPQDWQGPPDWQVPPDWSM). The span at 375 to 406 (PGWQSPPSWQAPPSWQSPQDWQGPPDWQVPPD) shows a compositional bias: low complexity. Residues 425–429 (WIPAD) form a 20; approximate repeat. Tandem repeats lie at residues 430–435 (WPIPPD) and 436–441 (WQNLRP). Low complexity predominate over residues 437 to 452 (QNLRPSPNLRSSSNSR). The disordered stretch occupies residues 437–463 (QNLRPSPNLRSSSNSRASQNQGPPQPR). Residues 468–666 (LQERANKLVK…RDWTAQFMEA (199 aa)) enclose the MAGE domain.

In terms of assembly, interacts with DLX5, DLX7 and MSX2 and forms homomultimers. Interacts with UNC5A. Interacts with TRIM28 and PJA1. Interacts with NGFR/p75NTR and RORA. In terms of tissue distribution, ubiquitously expressed in many adult tissues, except for the spleen. Expressed in osteoblastic and chondrogenic cell lines and also during embryonic development.

It is found in the nucleus. Its subcellular location is the cytoplasm. The protein resides in the cell membrane. Involved in the apoptotic response after nerve growth factor (NGF) binding in neuronal cells. Inhibits cell cycle progression, and facilitates NGFR-mediated apoptosis. May act as a regulator of the function of DLX family members. May enhance ubiquitin ligase activity of RING-type zinc finger-containing E3 ubiquitin-protein ligases. Proposed to act through recruitment and/or stabilization of the Ubl-conjugating enzyme (E2) at the E3:substrate complex. Plays a role in the circadian rhythm regulation. May act as RORA coregulator, modulating the expression of core clock genes such as BMAL1 and NFIL3, induced, or NR1D1, repressed. This Mus musculus (Mouse) protein is Melanoma-associated antigen D1 (Maged1).